We begin with the raw amino-acid sequence, 309 residues long: Tagatose-6-phosphate kinase 1 (309 aa).

This sequence belongs to the carbohydrate kinase PfkB family. LacC subfamily.

It carries out the reaction D-tagatofuranose 6-phosphate + ATP = D-tagatofuranose 1,6-bisphosphate + ADP + H(+). It participates in carbohydrate metabolism; D-tagatose 6-phosphate degradation; D-glyceraldehyde 3-phosphate and glycerone phosphate from D-tagatose 6-phosphate: step 1/2. This Streptococcus agalactiae serotype III (strain NEM316) protein is Tagatose-6-phosphate kinase 1.